We begin with the raw amino-acid sequence, 257 residues long: tRNA pseudouridine synthase A (257 aa).

D43 (nucleophile) is an active-site residue. Residue Y94 participates in substrate binding.

Belongs to the tRNA pseudouridine synthase TruA family.

It catalyses the reaction uridine(38/39/40) in tRNA = pseudouridine(38/39/40) in tRNA. In terms of biological role, formation of pseudouridine at positions 38, 39 and 40 in the anticodon stem and loop of transfer RNAs. This Pyrobaculum arsenaticum (strain DSM 13514 / JCM 11321 / PZ6) protein is tRNA pseudouridine synthase A.